Reading from the N-terminus, the 254-residue chain is Imidazole glycerol phosphate synthase subunit HisF (254 aa).

Residues D12 and D131 contribute to the active site.

Belongs to the HisA/HisF family. As to quaternary structure, heterodimer of HisH and HisF.

Its subcellular location is the cytoplasm. It catalyses the reaction 5-[(5-phospho-1-deoxy-D-ribulos-1-ylimino)methylamino]-1-(5-phospho-beta-D-ribosyl)imidazole-4-carboxamide + L-glutamine = D-erythro-1-(imidazol-4-yl)glycerol 3-phosphate + 5-amino-1-(5-phospho-beta-D-ribosyl)imidazole-4-carboxamide + L-glutamate + H(+). Its pathway is amino-acid biosynthesis; L-histidine biosynthesis; L-histidine from 5-phospho-alpha-D-ribose 1-diphosphate: step 5/9. In terms of biological role, IGPS catalyzes the conversion of PRFAR and glutamine to IGP, AICAR and glutamate. The HisF subunit catalyzes the cyclization activity that produces IGP and AICAR from PRFAR using the ammonia provided by the HisH subunit. The sequence is that of Imidazole glycerol phosphate synthase subunit HisF from Leuconostoc mesenteroides subsp. mesenteroides (strain ATCC 8293 / DSM 20343 / BCRC 11652 / CCM 1803 / JCM 6124 / NCDO 523 / NBRC 100496 / NCIMB 8023 / NCTC 12954 / NRRL B-1118 / 37Y).